The primary structure comprises 214 residues: Type IV major pilin protein PilE1 (214 aa).

A propeptide spans 1-7 (MNTLQKG) (leader sequence). Phe8 carries the N-methylphenylalanine modification. Residues 8–28 (FTLIELMIVIAIVGILAAVAL) traverse the membrane as a helical segment. Cys127 and Cys161 are oxidised to a cystine. The disordered stretch occupies residues 182–214 (AGTDAVTADTTGKDKEIDTKHLPSTCRDKSSAE). Basic and acidic residues predominate over residues 192 to 214 (TGKDKEIDTKHLPSTCRDKSSAE).

Belongs to the N-Me-Phe pilin family. In terms of assembly, the pili are polar flexible filaments of about 5.4 nanometers diameter and 2.5 micrometers average length; they consist of only a single polypeptide chain arranged in a helical configuration of five subunits per turn in the assembled pilus.

It is found in the fimbrium. It localises to the membrane. In terms of biological role, major component of the type IV pilus (T4P) that plays a role in cellular adherence, microcolony formation, resistance to neutrophil mediated killing, twitching motility as well as transformation. Mediates the attachment and the formation of bacterial microcolonies on host epithelial cells. Mechanistically, pili retractation induces host NF-kappa-B activation in infected cells, which is temporally associated with the formation of gonococcal microcolonies. The sequence is that of Type IV major pilin protein PilE1 (pilE1) from Neisseria gonorrhoeae.